Consider the following 66-residue polypeptide: Potassium channel toxin alpha-KTx (66 aa).

The N-terminal stretch at 1-21 (MNTKVVLIMLMITSVILVVEA) is a signal peptide. Cystine bridges form between cysteine 29/cysteine 49, cysteine 35/cysteine 59, cysteine 39/cysteine 61, and cysteine 44/cysteine 64.

Belongs to the short scorpion toxin superfamily. Potassium channel inhibitor family. In terms of tissue distribution, expressed by the venom gland.

It is found in the secreted. Blocks voltage-gated potassium channels. The polypeptide is Potassium channel toxin alpha-KTx (Hoffmannihadrurus gertschi (Scorpion)).